A 244-amino-acid polypeptide reads, in one-letter code: Proteasome subunit alpha (244 aa).

Belongs to the peptidase T1A family. The 20S proteasome core is composed of 14 alpha and 14 beta subunits that assemble into four stacked heptameric rings, resulting in a barrel-shaped structure. The two inner rings, each composed of seven catalytic beta subunits, are sandwiched by two outer rings, each composed of seven alpha subunits. The catalytic chamber with the active sites is on the inside of the barrel. Has a gated structure, the ends of the cylinder being occluded by the N-termini of the alpha-subunits. Is capped by the proteasome-associated ATPase, ARC.

Its subcellular location is the cytoplasm. The protein operates within protein degradation; proteasomal Pup-dependent pathway. Its activity is regulated as follows. The formation of the proteasomal ATPase ARC-20S proteasome complex, likely via the docking of the C-termini of ARC into the intersubunit pockets in the alpha-rings, may trigger opening of the gate for substrate entry. Interconversion between the open-gate and close-gate conformations leads to a dynamic regulation of the 20S proteasome proteolysis activity. In terms of biological role, component of the proteasome core, a large protease complex with broad specificity involved in protein degradation. This Xylanimonas cellulosilytica (strain DSM 15894 / JCM 12276 / CECT 5975 / KCTC 9989 / LMG 20990 / NBRC 107835 / XIL07) protein is Proteasome subunit alpha.